A 218-amino-acid chain; its full sequence is Holin (218 aa).

Topologically, residues 1-34 are cytoplasmic; that stretch reads MAAPRISFSPSDILFGVLDRLFKDNATGKVLASR. Residues 35–49 form a helical; Signal-anchor for type II membrane protein membrane-spanning segment; sequence VAVVILLFIMAIVWY. The Periplasmic portion of the chain corresponds to 50–218; that stretch reads RGDSFFEYYK…QAARILGRAK (169 aa). Cysteines 175 and 207 form a disulfide.

The protein belongs to the T4likevirus holin family. Homomultimer. Heterotetramer composed of 2 holin and 2 antiholin. The holin-antiholin complex binds dsDNA. Interacts (via C-terminus) with antiholin (via C-terminus); this interaction blocks the holin homomultimerization and delays host cell lysis. Interacts (via N-terminus) with the lysis inhibition accessory protein rIII; this interaction stabilizes the holin-antiholin complex thereby resulting in a robust block of the hole formation. Post-translationally, disulfide bond is required for functionality.

It is found in the host cell inner membrane. Functionally, accumulates harmlessly in the cytoplasmic membrane until it reaches a critical concentration that triggers the formation of micron-scale pores (holes) causing host cell membrane disruption and endolysin escape into the periplasmic space. Determines the precise timing of host cell lysis. Regulated by specific antiholins that somehow sense superinfections and then delay lysis. Participates with the endolysin and spanin proteins in the sequential events which lead to the programmed host cell lysis releasing the mature viral particles from the host cell. This Escherichia coli (Bacteriophage T4) protein is Holin (t).